The sequence spans 390 residues: Leu/Ile/Val-binding protein homolog 6 (390 aa).

Residues 1–21 form the signal peptide; that stretch reads MKKIALTALAVFSLAASAAYA.

It belongs to the leucine-binding protein family.

In terms of biological role, component of an amino-acid transport system. This is Leu/Ile/Val-binding protein homolog 6 from Brucella suis biovar 1 (strain 1330).